The following is a 158-amino-acid chain: NADH-quinone oxidoreductase subunit B (158 aa).

Residues Cys-37, Cys-38, Cys-102, and Cys-132 each contribute to the [4Fe-4S] cluster site.

Belongs to the complex I 20 kDa subunit family. As to quaternary structure, NDH-1 is composed of 14 different subunits. Subunits NuoB, C, D, E, F, and G constitute the peripheral sector of the complex. The cofactor is [4Fe-4S] cluster.

Its subcellular location is the cell inner membrane. The enzyme catalyses a quinone + NADH + 5 H(+)(in) = a quinol + NAD(+) + 4 H(+)(out). In terms of biological role, NDH-1 shuttles electrons from NADH, via FMN and iron-sulfur (Fe-S) centers, to quinones in the respiratory chain. Couples the redox reaction to proton translocation (for every two electrons transferred, four hydrogen ions are translocated across the cytoplasmic membrane), and thus conserves the redox energy in a proton gradient. This chain is NADH-quinone oxidoreductase subunit B, found in Alkalilimnicola ehrlichii (strain ATCC BAA-1101 / DSM 17681 / MLHE-1).